We begin with the raw amino-acid sequence, 268 residues long: Thiazole synthase (268 aa).

Lysine 108 acts as the Schiff-base intermediate with DXP in catalysis. Residues glycine 169, alanine 195–glycine 196, and asparagine 217–serine 218 contribute to the 1-deoxy-D-xylulose 5-phosphate site. The interval arginine 248–asparagine 268 is disordered. Over residues alanine 255 to asparagine 268 the composition is skewed to polar residues.

The protein belongs to the ThiG family. As to quaternary structure, homotetramer. Forms heterodimers with either ThiH or ThiS.

It is found in the cytoplasm. It catalyses the reaction [ThiS sulfur-carrier protein]-C-terminal-Gly-aminoethanethioate + 2-iminoacetate + 1-deoxy-D-xylulose 5-phosphate = [ThiS sulfur-carrier protein]-C-terminal Gly-Gly + 2-[(2R,5Z)-2-carboxy-4-methylthiazol-5(2H)-ylidene]ethyl phosphate + 2 H2O + H(+). It functions in the pathway cofactor biosynthesis; thiamine diphosphate biosynthesis. Catalyzes the rearrangement of 1-deoxy-D-xylulose 5-phosphate (DXP) to produce the thiazole phosphate moiety of thiamine. Sulfur is provided by the thiocarboxylate moiety of the carrier protein ThiS. In vitro, sulfur can be provided by H(2)S. The protein is Thiazole synthase of Prochlorococcus marinus (strain NATL1A).